The sequence spans 395 residues: Flap endonuclease 1 (395 aa).

The interval 1–108 (MGILGLSKLL…DELETRRQKA (108 aa)) is N-domain. A Mg(2+)-binding site is contributed by Asp-34. Arg-74 provides a ligand contact to DNA. 5 residues coordinate Mg(2+): Asp-90, Glu-162, Glu-164, Asp-183, and Asp-185. The interval 126–257 (MMEKMSKRTV…QRAWEGIQRY (132 aa)) is I-domain. Glu-162 is a DNA binding site. Residues Gly-235 and Asp-237 each contribute to the DNA site. Asp-237 contributes to the Mg(2+) binding site. The tract at residues 340 to 348 (TQGRLDNFF) is interaction with PCNA.

The protein belongs to the XPG/RAD2 endonuclease family. FEN1 subfamily. As to quaternary structure, interacts with PCNA. Three molecules of FEN1 bind to one PCNA trimer with each molecule binding to one PCNA monomer. PCNA stimulates the nuclease activity without altering cleavage specificity. Mg(2+) serves as cofactor. Post-translationally, phosphorylated. Phosphorylation upon DNA damage induces relocalization to the nuclear plasma.

It is found in the nucleus. The protein resides in the nucleolus. It localises to the nucleoplasm. The protein localises to the mitochondrion. Structure-specific nuclease with 5'-flap endonuclease and 5'-3' exonuclease activities involved in DNA replication and repair. During DNA replication, cleaves the 5'-overhanging flap structure that is generated by displacement synthesis when DNA polymerase encounters the 5'-end of a downstream Okazaki fragment. It enters the flap from the 5'-end and then tracks to cleave the flap base, leaving a nick for ligation. Also involved in the long patch base excision repair (LP-BER) pathway, by cleaving within the apurinic/apyrimidinic (AP) site-terminated flap. Acts as a genome stabilization factor that prevents flaps from equilibrating into structures that lead to duplications and deletions. Also possesses 5'-3' exonuclease activity on nicked or gapped double-stranded DNA, and exhibits RNase H activity. Also involved in replication and repair of rDNA and in repairing mitochondrial DNA. This chain is Flap endonuclease 1, found in Leishmania braziliensis.